Reading from the N-terminus, the 304-residue chain is Glycine--tRNA ligase alpha subunit (304 aa).

Belongs to the class-II aminoacyl-tRNA synthetase family. As to quaternary structure, tetramer of two alpha and two beta subunits.

The protein localises to the cytoplasm. The enzyme catalyses tRNA(Gly) + glycine + ATP = glycyl-tRNA(Gly) + AMP + diphosphate. This is Glycine--tRNA ligase alpha subunit from Yersinia pseudotuberculosis serotype O:1b (strain IP 31758).